Reading from the N-terminus, the 248-residue chain is 1-(5-phosphoribosyl)-5-[(5-phosphoribosylamino)methylideneamino] imidazole-4-carboxamide isomerase (248 aa).

Asp-8 serves as the catalytic Proton acceptor. Asp-131 functions as the Proton donor in the catalytic mechanism.

This sequence belongs to the HisA/HisF family.

It localises to the cytoplasm. It catalyses the reaction 1-(5-phospho-beta-D-ribosyl)-5-[(5-phospho-beta-D-ribosylamino)methylideneamino]imidazole-4-carboxamide = 5-[(5-phospho-1-deoxy-D-ribulos-1-ylimino)methylamino]-1-(5-phospho-beta-D-ribosyl)imidazole-4-carboxamide. It participates in amino-acid biosynthesis; L-histidine biosynthesis; L-histidine from 5-phospho-alpha-D-ribose 1-diphosphate: step 4/9. The chain is 1-(5-phosphoribosyl)-5-[(5-phosphoribosylamino)methylideneamino] imidazole-4-carboxamide isomerase from Paracidovorax citrulli (strain AAC00-1) (Acidovorax citrulli).